Reading from the N-terminus, the 40-residue chain is Photosystem II reaction center protein J (40 aa).

Residues 8 to 28 (IPLWIIGTVTGIFGIGLIGIF) form a helical membrane-spanning segment.

Belongs to the PsbJ family. PSII is composed of 1 copy each of membrane proteins PsbA, PsbB, PsbC, PsbD, PsbE, PsbF, PsbH, PsbI, PsbJ, PsbK, PsbL, PsbM, PsbT, PsbX, PsbY, PsbZ, Psb30/Ycf12, at least 3 peripheral proteins of the oxygen-evolving complex and a large number of cofactors. It forms dimeric complexes.

It localises to the plastid membrane. Functionally, one of the components of the core complex of photosystem II (PSII). PSII is a light-driven water:plastoquinone oxidoreductase that uses light energy to abstract electrons from H(2)O, generating O(2) and a proton gradient subsequently used for ATP formation. It consists of a core antenna complex that captures photons, and an electron transfer chain that converts photonic excitation into a charge separation. The chain is Photosystem II reaction center protein J from Cuscuta reflexa (Southern Asian dodder).